The sequence spans 242 residues: Probable 2-phosphosulfolactate phosphatase (242 aa).

It belongs to the ComB family. The cofactor is Mg(2+).

The enzyme catalyses (2R)-O-phospho-3-sulfolactate + H2O = (2R)-3-sulfolactate + phosphate. In Synechococcus sp. (strain JA-2-3B'a(2-13)) (Cyanobacteria bacterium Yellowstone B-Prime), this protein is Probable 2-phosphosulfolactate phosphatase.